A 93-amino-acid polypeptide reads, in one-letter code: U11-ctenitoxin-Pn1a (93 aa).

The N-terminal stretch at 1 to 21 is a signal peptide; sequence MKCAVLFLSVIALVHIFVVEA. Residues 22–34 constitute a propeptide that is removed on maturation; the sequence is EEEPDSDALVPQE. Intrachain disulfides connect cysteine 37/cysteine 51, cysteine 44/cysteine 57, cysteine 50/cysteine 75, cysteine 59/cysteine 73, and cysteine 83/cysteine 90.

The protein belongs to the neurotoxin 09 (Tx3-6) family. Expressed by the venom gland.

It localises to the secreted. Functionally, probable neurotoxin. This chain is U11-ctenitoxin-Pn1a, found in Phoneutria nigriventer (Brazilian armed spider).